Reading from the N-terminus, the 213-residue chain is Probable GH family 25 lysozyme 4 (213 aa).

Residues M1 to A19 form the signal peptide. The region spanning S21 to N213 is the Ch-type lysozyme domain. Residues D24, D112, and E114 contribute to the active site.

This sequence belongs to the glycosyl hydrolase 25 family.

Its subcellular location is the secreted. It catalyses the reaction Hydrolysis of (1-&gt;4)-beta-linkages between N-acetylmuramic acid and N-acetyl-D-glucosamine residues in a peptidoglycan and between N-acetyl-D-glucosamine residues in chitodextrins.. The sequence is that of Probable GH family 25 lysozyme 4 from Dictyostelium discoideum (Social amoeba).